Consider the following 100-residue polypeptide: NADH-quinone oxidoreductase subunit K (100 aa).

A run of 3 helical transmembrane segments spans residues 3–23 (PTAY…IGVL), 29–49 (IMIF…LVAF), and 63–83 (FIVM…IVAI).

Belongs to the complex I subunit 4L family. In terms of assembly, NDH-1 is composed of 15 different subunits. Subunits NuoA, H, J, K, L, M, N constitute the membrane sector of the complex.

It localises to the cell membrane. The catalysed reaction is a quinone + NADH + 5 H(+)(in) = a quinol + NAD(+) + 4 H(+)(out). NDH-1 shuttles electrons from NADH, via FMN and iron-sulfur (Fe-S) centers, to quinones in the respiratory chain. The immediate electron acceptor for the enzyme in this species is believed to be a menaquinone. Couples the redox reaction to proton translocation (for every two electrons transferred, four hydrogen ions are translocated across the cytoplasmic membrane), and thus conserves the redox energy in a proton gradient. This chain is NADH-quinone oxidoreductase subunit K, found in Deinococcus geothermalis (strain DSM 11300 / CIP 105573 / AG-3a).